A 388-amino-acid chain; its full sequence is Mannitol-1-phosphate 5-dehydrogenase (388 aa).

5–16 is an NAD(+) binding site; the sequence is AIQFGGGNIGRG. Residue Lys213 is part of the active site.

The protein belongs to the mannitol dehydrogenase family. As to quaternary structure, monomer.

The enzyme catalyses D-mannitol 1-phosphate + NAD(+) = beta-D-fructose 6-phosphate + NADH + H(+). Functionally, catalyzes the NAD(H)-dependent interconversion of D-fructose 6-phosphate and D-mannitol 1-phosphate in the metabolism of mannitol. Has a strong preference for NADH over NADPH. The polypeptide is Mannitol-1-phosphate 5-dehydrogenase (mpdA) (Aspergillus niger (strain ATCC MYA-4892 / CBS 513.88 / FGSC A1513)).